We begin with the raw amino-acid sequence, 616 residues long: Pentatricopeptide repeat-containing protein At4g15720 (616 aa).

10 PPR repeats span residues 63–93 (DTFT…MCEP), 94–128 (NVVS…RPVP), 130–164 (NEYT…GLRR), 165–199 (NIVV…GRNV), 200–228 (VSWT…FNAA), 235–269 (NQFM…GYES), 270–300 (NTVV…IRCH), 301–335 (SVIS…RINP), 336–371 (NYVT…GVVP), and 372–402 (DSRH…IEVG). Residues 409 to 484 (LWGALLSAGR…ERACSWIENK (76 aa)) are type E motif. The interval 485–515 (DSVYVFHAGDLSCDESGEIERFLKDLEKRMK) is type E(+) motif. A type DYW motif region spans residues 522–616 (SSSMITTSSS…NGSCTCRDYW (95 aa)).

Belongs to the PPR family. PCMP-H subfamily.

This is Pentatricopeptide repeat-containing protein At4g15720 (PCMP-H1) from Arabidopsis thaliana (Mouse-ear cress).